The primary structure comprises 421 residues: Glycosaminoglycan xylosylkinase homolog (421 aa).

An N-terminal signal peptide occupies residues 1–21 (MNKRSVIIAGIVASLLGLALG). Residue N83 is glycosylated (N-linked (GlcNAc...) asparagine). 2 residues coordinate ATP: Q131 and K147. D166 is a Mn(2+) binding site. Disulfide bonds link C225–C240 and C230–C233. 252 to 255 (IYIV) contacts ATP. 2 disulfides stabilise this stretch: C285/C351 and C352/C409. D314 is a catalytic residue. ATP-binding residues include E319 and D329. D329 is a binding site for Mn(2+).

This sequence belongs to the FAM20 family. It depends on Mn(2+) as a cofactor.

It localises to the golgi apparatus. The protein resides in the endoplasmic reticulum. It carries out the reaction 3-O-(beta-D-galactosyl-(1-&gt;3)-beta-D-galactosyl-(1-&gt;4)-beta-D-xylosyl)-L-seryl-[protein] + ATP = 3-O-(beta-D-galactosyl-(1-&gt;3)-beta-D-galactosyl-(1-&gt;4)-beta-D-2-O-phosphoxylosyl)-L-seryl-[protein] + ADP + H(+). Its function is as follows. Kylose kinase that mediates the 2-O-phosphorylation of xylose in the glycosaminoglycan-protein linkage region of proteoglycans. The polypeptide is Glycosaminoglycan xylosylkinase homolog (Drosophila melanogaster (Fruit fly)).